The sequence spans 148 residues: Lysozyme C (148 aa).

The first 18 residues, 1 to 18 (MKAVIILGLVLLSVTVQG), serve as a signal peptide directing secretion. In terms of domain architecture, C-type lysozyme spans 19–148 (KIFERCELAR…VSQYVQGCGV (130 aa)). 4 disulfides stabilise this stretch: Cys24-Cys146, Cys48-Cys134, Cys83-Cys99, and Cys95-Cys113. Active-site residues include Glu53 and Asp71.

It belongs to the glycosyl hydrolase 22 family. Monomer.

Its subcellular location is the secreted. It catalyses the reaction Hydrolysis of (1-&gt;4)-beta-linkages between N-acetylmuramic acid and N-acetyl-D-glucosamine residues in a peptidoglycan and between N-acetyl-D-glucosamine residues in chitodextrins.. Functionally, lysozymes have primarily a bacteriolytic function; those in tissues and body fluids are associated with the monocyte-macrophage system and enhance the activity of immunoagents. The polypeptide is Lysozyme C (LYZ) (Macaca mulatta (Rhesus macaque)).